Consider the following 252-residue polypeptide: Mitochondrial peculiar membrane protein 1 (252 aa).

The segment at 230 to 252 (TTTTSKGSSPQVKHKVVSVDEDN) is disordered.

It localises to the mitochondrion membrane. This chain is Mitochondrial peculiar membrane protein 1 (MPM1), found in Saccharomyces cerevisiae (strain ATCC 204508 / S288c) (Baker's yeast).